The primary structure comprises 546 residues: Sodium/hydrogen exchanger 2 (546 aa).

Topologically, residues 1–21 (MTMFASLTSKMLSVSTSDHAS) are cytoplasmic. The helical transmembrane segment at 22–42 (VVSLNLFVALLCACIVIGHLL) threads the bilayer. Residues 43–47 (EENRW) lie on the Vacuolar side of the membrane. The chain crosses the membrane as a helical span at residues 48 to 68 (MNESITALLIGLGTGVVILLI). Residues 69 to 75 (SRGKNSH) lie on the Cytoplasmic side of the membrane. Positions 76 to 96 (LLVFSEDLFFIYLLPPIIFNA) form an intramembrane region, helical. The Cytoplasmic portion of the chain corresponds to 97 to 111 (GFQVKKKQFFRNFVT). The chain crosses the membrane as a helical span at residues 112-132 (IMAFGAIGTVVSCTIISLGAI). The Vacuolar segment spans residues 133–148 (QFFKKLDIGTFDLGDF). 2 intramembrane regions (helical) span residues 149 to 168 (LAIG…QVLN) and 174 to 194 (LLYS…VVLF). Residues 195–218 (NAIQSFDLTHLNHEAAFQFLGNFF) are Vacuolar-facing. The helical transmembrane segment at 219–239 (YLFLLSTGLGVATGLISAYVI) threads the bilayer. Topologically, residues 240 to 264 (KKLYFGRHSTDREVALMMLMAYLSY) are cytoplasmic. Residues 265–285 (MLAELFALSGILTVFFCGIVM) traverse the membrane as a helical segment. At 286–304 (SHYTWHNVTESSRITTKHA) the chain is on the vacuolar side. The N-linked (GlcNAc...) asparagine glycan is linked to Asn-292. A helical transmembrane segment spans residues 305-325 (FATLSFLAETFIFLYVGMDAL). The Cytoplasmic portion of the chain corresponds to 326 to 344 (DIEKWRFVSDSPGTSVAVS). Residues 345–365 (SILMGLVMLGRAAFVFPLSFL) traverse the membrane as a helical segment. Residues 366–381 (SNLAKKHQSEKISIKQ) lie on the Vacuolar side of the membrane. Residues 382–402 (QVVIWWAGLMRGAVSMALAYN) traverse the membrane as a helical segment. Residues 403–415 (KFTRSGHTELRGN) are Cytoplasmic-facing. The chain crosses the membrane as a helical span at residues 416–436 (AIMITSTITVCLFSTMVFGML). Topologically, residues 437–546 (TKPLIRYLMP…ERSSHDLSKP (110 aa)) are vacuolar.

The protein belongs to the monovalent cation:proton antiporter 1 (CPA1) transporter (TC 2.A.36) family. As to expression, expressed in roots and shoots.

It is found in the vacuole membrane. The catalysed reaction is Na(+)(in) + H(+)(out) = Na(+)(out) + H(+)(in). It carries out the reaction K(+)(in) + H(+)(out) = K(+)(out) + H(+)(in). Functionally, acts in low affinity electroneutral exchange of protons for cations such as Na(+) or K(+) across membranes. May also exchange Li(+) and Cs(+) with a lower affinity. Involved in vacuolar ion compartmentalization necessary for cell volume regulation and cytoplasmic Na(+) detoxification. The sequence is that of Sodium/hydrogen exchanger 2 (NHX2) from Arabidopsis thaliana (Mouse-ear cress).